The sequence spans 182 residues: ATP-dependent protease subunit HslV (182 aa).

Residue Thr-12 is part of the active site. 3 residues coordinate Na(+): Ala-167, Cys-170, and Thr-173.

The protein belongs to the peptidase T1B family. HslV subfamily. In terms of assembly, a double ring-shaped homohexamer of HslV is capped on each side by a ring-shaped HslU homohexamer. The assembly of the HslU/HslV complex is dependent on binding of ATP.

The protein localises to the cytoplasm. It carries out the reaction ATP-dependent cleavage of peptide bonds with broad specificity.. Its activity is regulated as follows. Allosterically activated by HslU binding. In terms of biological role, protease subunit of a proteasome-like degradation complex believed to be a general protein degrading machinery. The polypeptide is ATP-dependent protease subunit HslV (Chlorobium phaeobacteroides (strain BS1)).